Reading from the N-terminus, the 101-residue chain is Small ribosomal subunit protein uS14 (101 aa).

Belongs to the universal ribosomal protein uS14 family. Part of the 30S ribosomal subunit. Contacts proteins S3 and S10.

Its function is as follows. Binds 16S rRNA, required for the assembly of 30S particles and may also be responsible for determining the conformation of the 16S rRNA at the A site. This is Small ribosomal subunit protein uS14 from Zymomonas mobilis subsp. mobilis (strain ATCC 31821 / ZM4 / CP4).